The following is a 377-amino-acid chain: Early estrogen-induced gene 1 protein (377 aa).

In terms of domain architecture, C2 NT-type spans 2–145 (AFLTKKKKFK…ILKVNIGMSL (144 aa)). Composition is skewed to polar residues over residues 160–173 (KTVS…SLQM), 188–198 (VRQNRSRQAML), and 222–234 (SRNS…QSKI). Residues 160–313 (KTVSPPGQDS…SVESQPTWVD (154 aa)) form a disordered region. Positions 256–269 (TSTSSSVSGGLSLT) are enriched in low complexity. Basic and acidic residues predominate over residues 274–285 (EPERDVKPEKPP).

Belongs to the EEIG family.

It localises to the nucleus. The protein resides in the cytoplasm. Functionally, may be involved in osteoclast differentiation. The protein is Early estrogen-induced gene 1 protein (eeig1) of Xenopus laevis (African clawed frog).